Consider the following 447-residue polypeptide: Chitobiosyldiphosphodolichol beta-mannosyltransferase (447 aa).

Residues 1 to 8 are Lumenal-facing; the sequence is MSVFGFDN. A helical transmembrane segment spans residues 9–29; it reads IPTWLWWLLAIYLATPFVLYV. Topologically, residues 30 to 127 are cytoplasmic; that stretch reads VQPYLFYEGK…LCSMFWKLRA (98 aa). The segment at residues 128–148 is an intramembrane region (helical); that stretch reads VDYILLQNPPTIPILPIAVVV. The Lumenal segment spans residues 149-447; it reads KTFSRAKLII…ALSELKIIHK (299 aa).

Belongs to the glycosyltransferase group 1 family.

The protein localises to the endoplasmic reticulum membrane. It carries out the reaction an N,N'-diacetylchitobiosyl-diphospho-di-trans,poly-cis-dolichol + GDP-alpha-D-mannose = a beta-D-Man-(1-&gt;4)-beta-D-GlcNAc-(1-&gt;4)-alpha-D-GlcNAc-diphospho-di-trans,poly-cis-dolichol + GDP + H(+). The protein operates within protein modification; protein glycosylation. Participates in the formation of the lipid-linked precursor oligosaccharide for N-glycosylation. Involved in assembling the dolichol-pyrophosphate-GlcNAc(2)-Man(5) intermediate on the cytoplasmic surface of the ER. The sequence is that of Chitobiosyldiphosphodolichol beta-mannosyltransferase (ALG1) from Kluyveromyces lactis (strain ATCC 8585 / CBS 2359 / DSM 70799 / NBRC 1267 / NRRL Y-1140 / WM37) (Yeast).